We begin with the raw amino-acid sequence, 169 residues long: Small ribosomal subunit protein bS18c (169 aa).

The interval 1–61 (MYTSKQPFLK…RRPRIGPGDR (61 aa)) is disordered. A compositionally biased stretch (basic residues) spans 27-55 (QTFRKSKQTFRKFKQPFRKSKQPFRRRPR).

Belongs to the bacterial ribosomal protein bS18 family. Part of the 30S ribosomal subunit.

The protein resides in the plastid. Its subcellular location is the chloroplast. This chain is Small ribosomal subunit protein bS18c, found in Agrostis stolonifera (Creeping bentgrass).